The sequence spans 208 residues: Transmembrane emp24 domain-containing protein p24beta2 (208 aa).

An N-terminal signal peptide occupies residues 1–21 (MSLKGTIVLLGLLWSFQATLG). At 22–176 (IRFVIDREEC…ENMSKRAVHK (155 aa)) the chain is on the lumenal side. A GOLD domain is found at 29 to 116 (EECFSHKAEY…HETIDFDVQL (88 aa)). The stretch at 134 to 149 (LMEQISKLEEALYNIQ) forms a coiled coil. N-linked (GlcNAc...) asparagine glycosylation is present at Asn-168. The chain crosses the membrane as a helical span at residues 177-195 (ALFESFALIGASFLQVYLL). At 196–208 (RRLFERKLGMSRV) the chain is on the cytoplasmic side. The COPII vesicle coat-binding motif lies at 198–199 (LF). A COPI vesicle coat-binding motif is present at residues 198–208 (LFERKLGMSRV). The Required for the export from the endoplasmic reticulum to the Golgi signature appears at 207-208 (RV).

Belongs to the EMP24/GP25L family. In terms of assembly, probably oligomerizes with other members of the EMP24/GP25L family. Associates with the COPI vesicle coat (coatomer). Associates with the COPII vesicle coat (coatomer). Interacts with p24delta5.

Its subcellular location is the golgi apparatus. It is found in the cis-Golgi network membrane. The protein resides in the golgi stack membrane. Functionally, involved in vesicular protein trafficking. Mainly functions in the early secretory pathway but also in post-Golgi membranes. Thought to act as cargo receptor at the lumenal side for incorporation of secretory cargo molecules into transport vesicles and to be involved in vesicle coat formation at the cytoplasmic side. Interacts with p24delta5 at endoplasmic reticulum export sites for endoplasmic reticulum exit and coupled transport to the Golgi apparatus. This is Transmembrane emp24 domain-containing protein p24beta2 from Arabidopsis thaliana (Mouse-ear cress).